The chain runs to 89 residues: Small ribosomal subunit protein uS15 (89 aa).

This sequence belongs to the universal ribosomal protein uS15 family. Part of the 30S ribosomal subunit. Forms a bridge to the 50S subunit in the 70S ribosome, contacting the 23S rRNA.

Its function is as follows. One of the primary rRNA binding proteins, it binds directly to 16S rRNA where it helps nucleate assembly of the platform of the 30S subunit by binding and bridging several RNA helices of the 16S rRNA. In terms of biological role, forms an intersubunit bridge (bridge B4) with the 23S rRNA of the 50S subunit in the ribosome. The sequence is that of Small ribosomal subunit protein uS15 from Photobacterium profundum (strain SS9).